Reading from the N-terminus, the 690-residue chain is Protein arginine N-methyltransferase 7 (690 aa).

2 consecutive SAM-dependent MTase PRMT-type domains span residues 14-357 (ENSW…YSLW) and 366-690 (AKSV…QKKP).

This sequence belongs to the class I-like SAM-binding methyltransferase superfamily. Protein arginine N-methyltransferase family. PRMT7 subfamily.

Its function is as follows. Essential arginine methyltransferase that can both catalyze the formation of omega-N monomethylarginine (MMA) and symmetrical dimethylarginine (sDMA). Specifically mediates the symmetrical dimethylation of arginine residues in the small nuclear ribonucleoproteins SmD1 and SmD3. The polypeptide is Protein arginine N-methyltransferase 7 (Art7) (Drosophila ananassae (Fruit fly)).